The sequence spans 185 residues: MIEVGDLEKGMYIKYEGDIYRVVDVNKHFRARGSGLIRTKLKSLSTGLIRDANFASGEKVEEAELSFRKAEYLYNDGENYYFMDLQTYEQYAIPESEVDEAKYYLIENTQVDLVMHDEKPIGINLPTTVVLEVIETEPNFKGDTVSGGGKPAVLQTGLKISVPFFINVGDKIKVDTRTGEYIERA.

Belongs to the elongation factor P family.

It is found in the cytoplasm. The protein operates within protein biosynthesis; polypeptide chain elongation. Involved in peptide bond synthesis. Stimulates efficient translation and peptide-bond synthesis on native or reconstituted 70S ribosomes in vitro. Probably functions indirectly by altering the affinity of the ribosome for aminoacyl-tRNA, thus increasing their reactivity as acceptors for peptidyl transferase. The sequence is that of Elongation factor P from Fervidobacterium nodosum (strain ATCC 35602 / DSM 5306 / Rt17-B1).